The sequence spans 238 residues: Zinc import ATP-binding protein ZnuC (238 aa).

The ABC transporter domain occupies 5-220; that stretch reads IQLNNISVNF…SEFIAIFGNI (216 aa). 37-44 lines the ATP pocket; that stretch reads GPNGAGKS.

Belongs to the ABC transporter superfamily. Zinc importer (TC 3.A.1.15.5) family. The complex is composed of two ATP-binding proteins (ZnuC), two transmembrane proteins (ZnuB) and a solute-binding protein (ZnuA).

The protein localises to the cell membrane. It carries out the reaction Zn(2+)(out) + ATP(in) + H2O(in) = Zn(2+)(in) + ADP(in) + phosphate(in) + H(+)(in). Its function is as follows. Part of the ABC transporter complex ZnuABC involved in zinc import. Responsible for energy coupling to the transport system. This is Zinc import ATP-binding protein ZnuC from Buchnera aphidicola subsp. Baizongia pistaciae (strain Bp).